Here is a 505-residue protein sequence, read N- to C-terminus: Prenylcysteine oxidase 1 (505 aa).

Residues 1–28 (MGRFAAALVGSLFWLGLLLCGLGSLASA) form the signal peptide. 3 N-linked (GlcNAc...) asparagine glycosylation sites follow: N196, N323, and N353.

The protein belongs to the prenylcysteine oxidase family. FAD serves as cofactor. In terms of tissue distribution, highly expressed in the liver, kidney, heart and brain.

The protein resides in the lysosome. The catalysed reaction is an S-polyprenyl-L-cysteine + O2 + H2O = a polyprenal + L-cysteine + H2O2. The enzyme catalyses S-(2E,6E)-farnesyl-L-cysteine + O2 + H2O = (2E,6E)-farnesal + L-cysteine + H2O2. It catalyses the reaction [(2E,6E,10E)-geranylgeranyl]-L-cysteine + O2 + H2O = (2E,6E,10E)-geranylgeranial + L-cysteine + H2O2. Functionally, prenylcysteine oxidase that cleaves the thioether bond of prenyl-L-cysteines, such as farnesylcysteine and geranylgeranylcysteine. Only active against free prenylcysteines and not prenylcysteine residues within prenylated proteins or peptides. Involved in the final step in the degradation of prenylated proteins, by degrading prenylcysteines after the protein has been degraded. This Mus musculus (Mouse) protein is Prenylcysteine oxidase 1.